Here is a 157-residue protein sequence, read N- to C-terminus: Stalk-specific protein B (157 aa).

Residues 1 to 19 (MRSILILLSLLLTIAFASA) form the signal peptide.

Its subcellular location is the secreted. The sequence is that of Stalk-specific protein B (staB) from Dictyostelium discoideum (Social amoeba).